The primary structure comprises 419 residues: POU domain, class 4, transcription factor 1 (419 aa).

The short motif at 57-66 is the POU-IV box element; that stretch reads RAEALAAVDI. Disordered stretches follow at residues 94–117 and 131–197; these read STVPLAHHHHHHHHHQALEPGDLL and AGGA…HSLG. Positions 99 to 108 are enriched in basic residues; sequence AHHHHHHHHH. The span at 131-184 shows a compositional bias: gly residues; sequence AGGAGAAAGGGGAHDGPGGGGGPGGGGGPGGGPGGGGGGGPGGGGGGPGGGLLG. One can recognise a POU-specific domain in the interval 261–338; the sequence is SDTDPRELEA…LQAWLEEAEG (78 aa). Positions 356–415 form a DNA-binding region, homeobox; it reads KRKRTSIAAPEKRSLEAYFAVQPRPSSEKIAAIAEKLDLKKNVVRVWFCNQRQKQKRMKF.

Belongs to the POU transcription factor family. Class-4 subfamily. Interacts (via N-terminus) with RIT2; the interaction controls POU4F1 transactivation activity on some neuronal target genes. Isoform 1 interacts with POU4F2; this interaction inhibits both POU4F1 DNA-binding and transcriptional activities. Isoform 1 interacts (C-terminus) with ESR1 (via DNA-binding domain); this interaction decreases the estrogen receptor ESR1 transcriptional activity in a DNA- and ligand 17-beta-estradiol-independent manner. As to expression, expressed in the brain and the retina. Present in the developing brain, spinal cord and eye.

The protein localises to the nucleus. It localises to the cytoplasm. Its function is as follows. Multifunctional transcription factor with different regions mediating its different effects. Acts by binding (via its C-terminal domain) to sequences related to the consensus octamer motif 5'-ATGCAAAT-3' in the regulatory regions of its target genes. Regulates the expression of specific genes involved in differentiation and survival within a subset of neuronal lineages. It has been shown that activation of some of these genes requires its N-terminal domain, maybe through a neuronal-specific cofactor. Activates BCL2 expression and protects neuronal cells from apoptosis (via the N-terminal domain). Induces neuronal process outgrowth and the coordinate expression of genes encoding synaptic proteins. Exerts its major developmental effects in somatosensory neurons and in brainstem nuclei involved in motor control. Stimulates the binding affinity of the nuclear estrogene receptor ESR1 to DNA estrogen response element (ERE), and hence modulates ESR1-induced transcriptional activity. May positively regulate POU4F2 and POU4F3. Regulates dorsal root ganglion sensory neuron specification and axonal projection into the spinal cord. Plays a role in TNFSF11-mediated terminal osteoclast differentiation. Negatively regulates its own expression interacting directly with a highly conserved autoregulatory domain surrounding the transcription initiation site. Able to act as transcription factor, cannot regulate the expression of the same subset of genes than isoform 1. Does not have antiapoptotic effect on neuronal cells. In Homo sapiens (Human), this protein is POU domain, class 4, transcription factor 1.